The following is a 279-amino-acid chain: Protease HtpX homolog (279 aa).

2 helical membrane-spanning segments follow: residues 6 to 26 (VFVL…ALGG) and 29 to 49 (GAIL…WGSS). His-130 is a binding site for Zn(2+). Residue Glu-131 is part of the active site. His-134 contacts Zn(2+). The next 2 membrane-spanning stretches (helical) occupy residues 145–165 (IAAT…FFGG) and 176–196 (VAGI…QFAI). Glu-201 contributes to the Zn(2+) binding site.

It belongs to the peptidase M48B family. The cofactor is Zn(2+).

It localises to the cell inner membrane. This Gemmatimonas aurantiaca (strain DSM 14586 / JCM 11422 / NBRC 100505 / T-27) protein is Protease HtpX homolog.